Consider the following 348-residue polypeptide: Rhodopsin (348 aa).

Position 1 is an N-acetylmethionine (M1). At 1 to 36 (MNGTEGLNFYVPFSNKTGVVRSPFEYPQYYLAEPWQ) the chain is on the extracellular side. N2 and N15 each carry an N-linked (GlcNAc...) asparagine glycan. A helical transmembrane segment spans residues 37 to 61 (FSVLAAYMFLLIVLGFPINFLTLYV). Residues 62-73 (TVQHKKLRTPLN) are Cytoplasmic-facing. The chain crosses the membrane as a helical span at residues 74–99 (YILLNLAVANLFMVFGGFTTTLYTSL). The Extracellular segment spans residues 100–111 (HAYFVFGPTGCN). An intrachain disulfide couples C110 to C187. A helical transmembrane segment spans residues 112-133 (LEGFFATLGGEIALWSLVVLAI). The short motif at 134 to 136 (ERY) is the 'Ionic lock' involved in activated form stabilization element. The Cytoplasmic segment spans residues 134 to 152 (ERYVVVCKPMSNFRFGENH). The chain crosses the membrane as a helical span at residues 153–173 (AIMGLALTWIMAMACAAAPLV). The Extracellular portion of the chain corresponds to 174 to 202 (GWSRYIPEGMQCSCGIDYYTSRQEVNNES). E201 provides a ligand contact to Zn(2+). A helical transmembrane segment spans residues 203–227 (FVIYMFVVHFTIPLVIIFFCYGQLV). Residues 228–252 (FTVKEAAAQQQESATTQKAEKEVTR) lie on the Cytoplasmic side of the membrane. Residues 253-274 (MVIIMVVAFLICWVPYASVAFY) form a helical membrane-spanning segment. Topologically, residues 275–286 (IFTHQGSDFGPI) are extracellular. A Zn(2+)-binding site is contributed by Q279. A helical transmembrane segment spans residues 287–306 (FMTIPSFFAKSSSIYNPVIY). K296 is modified (N6-(retinylidene)lysine). At 307 to 348 (IMMNKQFRNCMLTTLCCGRNPLGDDEASTTASKTETSQVAPA) the chain is on the cytoplasmic side. Residues C322 and C323 are each lipidated (S-palmitoyl cysteine). S334 carries the phosphoserine modification. Residues T335 and T336 each carry the phosphothreonine modification. S338 is modified (phosphoserine). Phosphothreonine is present on residues T340 and T342. Position 343 is a phosphoserine (S343).

This sequence belongs to the G-protein coupled receptor 1 family. Opsin subfamily. Homodimer. May form a complex composed of RHO, GRK1 and RCVRN in a Ca(2+)-dependent manner; RCVRN prevents the interaction between GRK1 and RHO. Interacts with GRK1. Interacts (phosphorylated form) with SAG. Interacts with GNAT1. Interacts with GNAT3. SAG and G-proteins compete for a common binding site. Interacts with PRCD; the interaction promotes PRCD stability. Forms a complex with ASAP1 and ARF4. Forms a complex with ASAP1, RAB11A, Rabin8/RAB3IP, ARF4 and RAB11FIP3; the complex regulates Golgi-to-cilia rhodopsin/RHO transport in photoreceptors. Post-translationally, contains one covalently linked retinal chromophore. Upon light absorption, the covalently bound 11-cis-retinal is converted to all-trans-retinal. After hydrolysis of the Schiff base and release of the covalently bound all-trans-retinal, active rhodopsin is regenerated by binding of a fresh molecule of 11-cis-retinal.

Its subcellular location is the membrane. It localises to the cell projection. The protein localises to the cilium. It is found in the photoreceptor outer segment. Photoreceptor required for image-forming vision at low light intensity. Light-induced isomerization of 11-cis to all-trans retinal triggers a conformational change that activates signaling via G-proteins. Signaling mediates the activation of phospholipase C. Subsequent receptor phosphorylation mediates displacement of the bound G-protein alpha subunit by arrestin and terminates signaling. The sequence is that of Rhodopsin (RHO) from Tursiops truncatus (Atlantic bottle-nosed dolphin).